The sequence spans 227 residues: UPF0173 metal-dependent hydrolase BPUM_2573 (227 aa).

The protein belongs to the UPF0173 family.

The protein is UPF0173 metal-dependent hydrolase BPUM_2573 of Bacillus pumilus (strain SAFR-032).